We begin with the raw amino-acid sequence, 665 residues long: Syntabulin (665 aa).

Residues 1–22 (MGPLRESKKEQRVQHQEKEISR) are compositionally biased toward basic and acidic residues. Residues 1–271 (MGPLRESKKE…GVKPPNPEQY (271 aa)) form a disordered region. The tract at residues 2–421 (GPLRESKKEQ…DKLPDGLSLE (420 aa)) is sufficient for interaction with KIF5B. A compositionally biased stretch (low complexity) spans 35–52 (PQQQQQQQNKVSPASESP). Residue Ser-54 is modified to Phosphoserine. Positions 61-77 (FNPSSSGRSARTISSNS) are enriched in low complexity. Polar residues predominate over residues 85–101 (CPSSQSVSPVKTPSDTG). The residue at position 111 (Ser-111) is a Phosphoserine. Residues 141-162 (GGIIKPGSEADFSSSSSTGSIS) are compositionally biased toward low complexity. Residues 168–180 (MSTTGNKRASFSR) show a composition bias toward polar residues. Low complexity predominate over residues 225–245 (SYAPSSPSSSNSGSYKGSDCS). Residues 275-357 (LQQKEVTVRH…MRSSLADKDK (83 aa)) are a coiled coil. The tract at residues 314–421 (REDWIEEECH…DKLPDGLSLE (108 aa)) is sufficient for interaction with STX1A. Ser-400 and Ser-557 each carry phosphoserine. A helical transmembrane segment spans residues 609–629 (FLVDLLAVAAPVVPTVLWAFS).

As to quaternary structure, interacts with STX1A and KIF5B.

The protein localises to the golgi apparatus membrane. Part of a kinesin motor-adapter complex that is critical for the anterograde axonal transport of active zone components and contributes to activity-dependent presynaptic assembly during neuronal development. The protein is Syntabulin (Sybu) of Mus musculus (Mouse).